The sequence spans 205 residues: Guanylate kinase (205 aa).

The region spanning 17–195 (SRLLVLSGPS…AVEAVERLLF (179 aa)) is the Guanylate kinase-like domain. 24 to 31 (GPSGVGKD) is a binding site for ATP.

Belongs to the guanylate kinase family.

It is found in the cytoplasm. It carries out the reaction GMP + ATP = GDP + ADP. In terms of biological role, essential for recycling GMP and indirectly, cGMP. This is Guanylate kinase from Gloeobacter violaceus (strain ATCC 29082 / PCC 7421).